The primary structure comprises 352 residues: Histidinol-phosphate aminotransferase (352 aa).

Lys-210 is subject to N6-(pyridoxal phosphate)lysine.

Belongs to the class-II pyridoxal-phosphate-dependent aminotransferase family. Histidinol-phosphate aminotransferase subfamily. As to quaternary structure, homodimer. It depends on pyridoxal 5'-phosphate as a cofactor.

The catalysed reaction is L-histidinol phosphate + 2-oxoglutarate = 3-(imidazol-4-yl)-2-oxopropyl phosphate + L-glutamate. It functions in the pathway amino-acid biosynthesis; L-histidine biosynthesis; L-histidine from 5-phospho-alpha-D-ribose 1-diphosphate: step 7/9. The polypeptide is Histidinol-phosphate aminotransferase (Clostridium acetobutylicum (strain ATCC 824 / DSM 792 / JCM 1419 / IAM 19013 / LMG 5710 / NBRC 13948 / NRRL B-527 / VKM B-1787 / 2291 / W)).